A 353-amino-acid chain; its full sequence is Heat-inducible transcription repressor HrcA (353 aa).

It belongs to the HrcA family.

In terms of biological role, negative regulator of class I heat shock genes (grpE-dnaK-dnaJ and groELS operons). Prevents heat-shock induction of these operons. The polypeptide is Heat-inducible transcription repressor HrcA (Synechococcus elongatus (strain ATCC 33912 / PCC 7942 / FACHB-805) (Anacystis nidulans R2)).